A 993-amino-acid polypeptide reads, in one-letter code: Replication protein 1a (993 aa).

The tract at residues 51–409 (NVLGVKDSEV…TIVINGMSMQ (359 aa)) is methyltransferase. Residues 72–290 (HLTQQEFAPH…HDWENIKSFL (219 aa)) form the Alphavirus-like MT domain. Residues 538-561 (AQPVSEVSDSPETSSQTPDDTADV) form a disordered region. Residues 542–556 (SEVSDSPETSSQTPD) are compositionally biased toward polar residues. The region spanning 687-838 (CVICNSESLS…KIIPDETSDA (152 aa)) is the (+)RNA virus helicase ATP-binding domain. The segment at 712 to 975 (VDGVAGCGKT…LTRHKVTFRY (264 aa)) is ATP-dependent helicase. Residue 714 to 721 (GVAGCGKT) participates in ATP binding. The (+)RNA virus helicase C-terminal domain occupies 839 to 993 (DTTFRSPQDV…DLIAECVARA (155 aa)).

Belongs to the bromoviridae replication protein 1a family. As to quaternary structure, interacts with RNA-directed RNA polymerase 2a.

Its subcellular location is the host endoplasmic reticulum membrane. Involved in the virus replication. Contains a helicase domain and a methyltransferase domain. The methyltransferase domain is probably involved in viral RNA capping. Involved in the formation of ER membrane spherular invaginations in which RNA replication complexes form. The chain is Replication protein 1a from Cucumber mosaic virus (strain FNY) (CMV).